We begin with the raw amino-acid sequence, 189 residues long: Peptide deformylase (189 aa).

Fe cation-binding residues include Cys-93 and His-135. Residue Glu-136 is part of the active site. His-139 provides a ligand contact to Fe cation.

Belongs to the polypeptide deformylase family. It depends on Fe(2+) as a cofactor.

It carries out the reaction N-terminal N-formyl-L-methionyl-[peptide] + H2O = N-terminal L-methionyl-[peptide] + formate. Removes the formyl group from the N-terminal Met of newly synthesized proteins. Requires at least a dipeptide for an efficient rate of reaction. N-terminal L-methionine is a prerequisite for activity but the enzyme has broad specificity at other positions. The sequence is that of Peptide deformylase from Karelsulcia muelleri (strain GWSS) (Sulcia muelleri).